The primary structure comprises 414 residues: MYQRNILVEQADPEVWAAIQAENLRQEQHIELIASENYASPAVMAAQGSQLTNKYAEGYPGKRYYGGCENVDVVEQLAIDRVKKLFGADAANVQPNSGSQANQAVLLAFLKPGDTILGMSLAEGGHLTHGMPLNMSGKWFNIVSYGLNEKEEIDYDALEAKAREHKPKLIIAGASAYSLRIDFERFAKIAKEVGAIFWVDIAHYAGLVVAGEYPNPVPFADVVTSTTHKSLRGPRGGIILMKAEHEKAINSAIFPGLQGGPLEHVIAAKAVAFKEALTPEFKAYQQQVAKNAKVFAETLIERGLRIISGRTESHVMLVDLRAKGITGKAAEAALGQAHITINKNSIPNDPEKPMVTSGIRVGTPAITTRGFKEEETRITANLLADVLENPNDEANLAAVREKVHALTSRFPVYR.

Residues L121 and 125-127 (GHL) each bind (6S)-5,6,7,8-tetrahydrofolate. K229 is subject to N6-(pyridoxal phosphate)lysine.

This sequence belongs to the SHMT family. In terms of assembly, homodimer. Pyridoxal 5'-phosphate serves as cofactor.

Its subcellular location is the cytoplasm. The catalysed reaction is (6R)-5,10-methylene-5,6,7,8-tetrahydrofolate + glycine + H2O = (6S)-5,6,7,8-tetrahydrofolate + L-serine. It functions in the pathway one-carbon metabolism; tetrahydrofolate interconversion. Its pathway is amino-acid biosynthesis; glycine biosynthesis; glycine from L-serine: step 1/1. In terms of biological role, catalyzes the reversible interconversion of serine and glycine with tetrahydrofolate (THF) serving as the one-carbon carrier. This reaction serves as the major source of one-carbon groups required for the biosynthesis of purines, thymidylate, methionine, and other important biomolecules. Also exhibits THF-independent aldolase activity toward beta-hydroxyamino acids, producing glycine and aldehydes, via a retro-aldol mechanism. In Paracidovorax citrulli (strain AAC00-1) (Acidovorax citrulli), this protein is Serine hydroxymethyltransferase.